The chain runs to 486 residues: GDP-Man:Man(3)GlcNAc(2)-PP-Dol alpha-1,2-mannosyltransferase (486 aa).

Topologically, residues 1-16 are lumenal; it reads MAGPMCLCGMMRLLTA. Residues 17 to 37 form a helical membrane-spanning segment; it reads LFIPVLITSVGLCLIFVLLFI. At 38 to 229 the chain is on the cytoplasmic side; the sequence is CTRLWVQRKK…SNNPVLSRLK (192 aa). The segment at residues 230-250 is an intramembrane region (helical); that stretch reads LIYYYLFALFYGWVGSCSDVI. Residues 251–393 are Cytoplasmic-facing; it reads MVNSTWTFSH…IGLHTMWNEH (143 aa). Positions 394 to 414 form an intramembrane region, helical; sequence FGIGIVECMAAGTIILAHNSG. The Cytoplasmic segment spans residues 415–486; sequence GPKLDIVVPH…FLASSEPLFK (72 aa).

This sequence belongs to the glycosyltransferase group 1 family. Glycosyltransferase 4 subfamily.

The protein localises to the endoplasmic reticulum membrane. The catalysed reaction is an alpha-D-Man-(1-&gt;3)-[alpha-D-Man-(1-&gt;6)]-beta-D-Man-(1-&gt;4)-beta-D-GlcNAc-(1-&gt;4)-alpha-D-GlcNAc-diphospho-di-trans,poly-cis-dolichol + 2 GDP-alpha-D-mannose = an alpha-D-Man-(1-&gt;2)-alpha-D-Man-(1-&gt;2)-alpha-D-Man-(1-&gt;3)-[alpha-D-Man-(1-&gt;6)]-beta-D-Man-(1-&gt;4)-beta-D-GlcNAc-(1-&gt;4)-alpha-D-GlcNAc-diphospho-di-trans,poly-cis-dolichol + 2 GDP + 2 H(+). Its pathway is protein modification; protein glycosylation. Functionally, GDP-Man:Man(3)GlcNAc(2)-PP-Dol alpha-1,2-mannosyltransferase that operates in the biosynthetic pathway of dolichol-linked oligosaccharides, the glycan precursors employed in protein asparagine (N)-glycosylation. The assembly of dolichol-linked oligosaccharides begins on the cytosolic side of the endoplasmic reticulum membrane and finishes in its lumen. The sequential addition of sugars to dolichol pyrophosphate produces dolichol-linked oligosaccharides containing fourteen sugars, including two GlcNAcs, nine mannoses and three glucoses. Once assembled, the oligosaccharide is transferred from the lipid to nascent proteins by oligosaccharyltransferases. Catalyzes, on the cytoplasmic face of the endoplasmic reticulum, the addition of the fourth and fifth mannose residues to the dolichol-linked oligosaccharide chain, to produce Man(5)GlcNAc(2)-PP-dolichol core oligosaccharide. Man(5)GlcNAc(2)-PP-dolichol is a substrate for ALG3, the following enzyme in the biosynthetic pathway. In Xenopus laevis (African clawed frog), this protein is GDP-Man:Man(3)GlcNAc(2)-PP-Dol alpha-1,2-mannosyltransferase (alg11).